The following is a 597-amino-acid chain: Aspartate--tRNA(Asp/Asn) ligase (597 aa).

Glu175 is a binding site for L-aspartate. The tract at residues 199 to 202 (QQYK) is aspartate. Arg221 and His456 together coordinate L-aspartate. ATP is bound at residue 221–223 (RDE). Glu490 contacts ATP. Residue Arg497 coordinates L-aspartate. 542 to 545 (GVDR) serves as a coordination point for ATP.

It belongs to the class-II aminoacyl-tRNA synthetase family. Type 1 subfamily. In terms of assembly, homodimer.

It localises to the cytoplasm. It carries out the reaction tRNA(Asx) + L-aspartate + ATP = L-aspartyl-tRNA(Asx) + AMP + diphosphate. In terms of biological role, aspartyl-tRNA synthetase with relaxed tRNA specificity since it is able to aspartylate not only its cognate tRNA(Asp) but also tRNA(Asn). Reaction proceeds in two steps: L-aspartate is first activated by ATP to form Asp-AMP and then transferred to the acceptor end of tRNA(Asp/Asn). This chain is Aspartate--tRNA(Asp/Asn) ligase, found in Beijerinckia indica subsp. indica (strain ATCC 9039 / DSM 1715 / NCIMB 8712).